Here is a 185-residue protein sequence, read N- to C-terminus: Ribosome-recycling factor (185 aa).

Belongs to the RRF family.

The protein resides in the cytoplasm. Responsible for the release of ribosomes from messenger RNA at the termination of protein biosynthesis. May increase the efficiency of translation by recycling ribosomes from one round of translation to another. In Lacticaseibacillus casei (strain BL23) (Lactobacillus casei), this protein is Ribosome-recycling factor.